A 2335-amino-acid chain; its full sequence is Serine/threonine-protein kinase tor1 (2335 aa).

15 HEAT repeats span residues Met1 to Lys31, Leu164 to Gln201, Pro331 to Leu371, Pro410 to Pro449, Tyr474 to Ile512, Glu522 to Ala560, Pro562 to Ala596, Pro642 to Glu679, Asp684 to Tyr722, Leu728 to Tyr766, Val843 to Pro880, Leu904 to Lys923, Phe924 to Asn961, Glu964 to Phe1003, and Asp1005 to Tyr1042. One can recognise an FAT domain in the interval Val1226–Ser1781. A PI3K/PI4K catalytic domain is found at Phe1955–Ser2269. Residues Val1961–Arg1967 are G-loop. Residue Thr1972 is modified to Phosphothreonine; by PKB/AKT1. The tract at residues Gly2134–Asn2142 is catalytic loop. Positions His2154–Thr2179 are activation loop. Residues Glu2303 to Trp2335 enclose the FATC domain.

It belongs to the PI3/PI4-kinase family. As to quaternary structure, the target of rapamycin complex 2 (TORC2) is composed of at least bit61, pop3/wat1, sin1, ste20 and tor1. In terms of processing, phosphorylation at Thr-1972 in the ATP-binding region by AKT1 strongly reduces kinase activity.

It is found in the cytoplasm. The catalysed reaction is L-seryl-[protein] + ATP = O-phospho-L-seryl-[protein] + ADP + H(+). It carries out the reaction L-threonyl-[protein] + ATP = O-phospho-L-threonyl-[protein] + ADP + H(+). Catalytic component of TORC2, which regulates multiple cellular processes to control cell growth in response to environmental signals. In response to signals, TORC2 phosphorylates AGC protein kinase family members. TORC2 is required for cell survival under various stress conditions. TORC2 positively controls G1 cell-cycle arrest, sexual development and amino acid uptake. Positively regulates amino acid uptake through the control of expression of amino acid permeases. Responsible for the phosphorylation of AGC kinase gad8 at 'Ser-527' and 'Ser-546', activating gad8 kinase activity and promoting sexual development. This chain is Serine/threonine-protein kinase tor1, found in Schizosaccharomyces pombe (strain 972 / ATCC 24843) (Fission yeast).